We begin with the raw amino-acid sequence, 317 residues long: Ribosomal RNA small subunit methyltransferase H (317 aa).

Residues 37–39 (AGH), Asp-56, Phe-85, Asp-106, and Gln-113 contribute to the S-adenosyl-L-methionine site.

The protein belongs to the methyltransferase superfamily. RsmH family.

The protein resides in the cytoplasm. It carries out the reaction cytidine(1402) in 16S rRNA + S-adenosyl-L-methionine = N(4)-methylcytidine(1402) in 16S rRNA + S-adenosyl-L-homocysteine + H(+). Specifically methylates the N4 position of cytidine in position 1402 (C1402) of 16S rRNA. The chain is Ribosomal RNA small subunit methyltransferase H from Lactococcus lactis subsp. lactis (strain IL1403) (Streptococcus lactis).